The chain runs to 956 residues: Glutamate receptor ionotropic, kainate 4 (956 aa).

The N-terminal stretch at methionine 1 to cysteine 20 is a signal peptide. Residues serine 21–proline 545 are Extracellular-facing. 8 N-linked (GlcNAc...) asparagine glycosylation sites follow: asparagine 158, asparagine 220, asparagine 272, asparagine 286, asparagine 323, asparagine 408, asparagine 415, and asparagine 479. Positions 500, 502, and 507 each coordinate L-glutamate. A helical membrane pass occupies residues glycine 546–alanine 566. Over arginine 567–glycine 623 the chain is Cytoplasmic. The helical transmembrane segment at valine 624 to leucine 644 threads the bilayer. Over threonine 645–asparagine 804 the chain is Extracellular. 3 residues coordinate L-glutamate: serine 674, serine 675, and glutamate 723. Asparagine 736 carries N-linked (GlcNAc...) asparagine glycosylation. A helical transmembrane segment spans residues isoleucine 805–leucine 825. Residues glutamate 826–glutamate 956 lie on the Cytoplasmic side of the membrane. The segment at leucine 931–glutamate 956 is disordered. Residues arginine 939–lysine 948 show a composition bias toward basic and acidic residues.

Belongs to the glutamate-gated ion channel (TC 1.A.10.1) family. GRIK4 subfamily. Homodimer. Can form functional heteromeric receptors with GRIK1, GRIK2 and GRIK3 subunits. Forms a heteromeric complex with GRIK2. Expressed in the hippocampus and cerebellum (at protein level).

It localises to the cell membrane. It is found in the postsynaptic cell membrane. The protein resides in the presynaptic cell membrane. Functionally, ionotropic glutamate receptor that functions as a cation-permeable ligand-gated ion channel. Cannot form functional channels on its own and produces channel activity only in heteromeric assembly with GRIK1, GRIK2 and GRIK3 subunits. This Mus musculus (Mouse) protein is Glutamate receptor ionotropic, kainate 4 (Grik4).